The following is a 281-amino-acid chain: ATP phosphoribosyltransferase (281 aa).

Belongs to the ATP phosphoribosyltransferase family. Long subfamily. The cofactor is Mg(2+).

It localises to the cytoplasm. The enzyme catalyses 1-(5-phospho-beta-D-ribosyl)-ATP + diphosphate = 5-phospho-alpha-D-ribose 1-diphosphate + ATP. It participates in amino-acid biosynthesis; L-histidine biosynthesis; L-histidine from 5-phospho-alpha-D-ribose 1-diphosphate: step 1/9. With respect to regulation, feedback inhibited by histidine. In terms of biological role, catalyzes the condensation of ATP and 5-phosphoribose 1-diphosphate to form N'-(5'-phosphoribosyl)-ATP (PR-ATP). Has a crucial role in the pathway because the rate of histidine biosynthesis seems to be controlled primarily by regulation of HisG enzymatic activity. The protein is ATP phosphoribosyltransferase (hisG) of Archaeoglobus fulgidus (strain ATCC 49558 / DSM 4304 / JCM 9628 / NBRC 100126 / VC-16).